A 92-amino-acid chain; its full sequence is uncharacterized protein (92 aa).

The 92-residue stretch at 1 to 92 (MNGNKDAIFK…LKNLLKGWIE (92 aa)) folds into the HTH arsR-type domain. The segment at residues 37–61 (IRLITKYDLSITRQAIAKHLSVLED) is a DNA-binding region (H-T-H motif).

This is an uncharacterized protein from Bacillus subtilis (strain 168).